Consider the following 339-residue polypeptide: DNA-directed RNA polymerase subunit alpha (339 aa).

Residues 1–238 are alpha N-terminal domain (alpha-NTD); that stretch reads MVDPIVTKNW…EQLSIFINFD (238 aa). Positions 255 to 339 are alpha C-terminal domain (alpha-CTD); sequence LNENLFRSVD…KAAPQGAPKV (85 aa).

Belongs to the RNA polymerase alpha chain family. In terms of assembly, homodimer. The RNAP catalytic core consists of 2 alpha, 1 beta, 1 beta' and 1 omega subunit. When a sigma factor is associated with the core the holoenzyme is formed, which can initiate transcription.

It catalyses the reaction RNA(n) + a ribonucleoside 5'-triphosphate = RNA(n+1) + diphosphate. In terms of biological role, DNA-dependent RNA polymerase catalyzes the transcription of DNA into RNA using the four ribonucleoside triphosphates as substrates. This chain is DNA-directed RNA polymerase subunit alpha, found in Anaeromyxobacter sp. (strain Fw109-5).